We begin with the raw amino-acid sequence, 443 residues long: Tubulin epsilon and delta complex protein 2 (443 aa).

A coiled-coil region spans residues Arg-8–Arg-33. Disordered stretches follow at residues Ala-45 to Gln-72 and Gly-93 to Pro-146. Residues Leu-106 to Ser-124 show a composition bias toward low complexity.

As to quaternary structure, interacts with TEDC1. Found in a complex with TEDC1, TEDC2, TUBE1 and TUBD1.

It is found in the cell projection. The protein localises to the cilium. The protein resides in the cytoplasm. Its subcellular location is the cytoskeleton. It localises to the microtubule organizing center. It is found in the centrosome. The protein localises to the centriole. In terms of biological role, acts as a positive regulator of ciliary hedgehog signaling. Required for centriole stability. This chain is Tubulin epsilon and delta complex protein 2, found in Bos taurus (Bovine).